The chain runs to 398 residues: Na(+)/H(+) antiporter NhaA (398 aa).

The next 12 membrane-spanning stretches (helical) occupy residues 9-29, 57-77, 95-115, 124-144, 154-174, 177-197, 204-224, 226-246, 255-275, 288-308, 329-349, and 359-379; these read MITH…AAIV, LSLL…AVGL, AFPA…YSLM, AGWA…LALL, VFML…IALF, TALE…MALM, FLSL…LSGI, ATLA…STEV, WLQP…NAGI, FLPL…IVLF, IAAA…IANL, and IVLA…LGYL.

The protein belongs to the NhaA Na(+)/H(+) (TC 2.A.33) antiporter family.

The protein localises to the cell inner membrane. It catalyses the reaction Na(+)(in) + 2 H(+)(out) = Na(+)(out) + 2 H(+)(in). Functionally, na(+)/H(+) antiporter that extrudes sodium in exchange for external protons. The protein is Na(+)/H(+) antiporter NhaA of Sodalis glossinidius (strain morsitans).